We begin with the raw amino-acid sequence, 159 residues long: UPF0260 protein Avi_1324 (159 aa).

The protein belongs to the UPF0260 family.

In Allorhizobium ampelinum (strain ATCC BAA-846 / DSM 112012 / S4) (Agrobacterium vitis (strain S4)), this protein is UPF0260 protein Avi_1324.